A 518-amino-acid chain; its full sequence is Bifunctional purine biosynthesis protein PurH (518 aa).

The MGS-like domain maps to 1 to 144 (MSKRALISVS…KNHASVTVVC (144 aa)).

The protein belongs to the PurH family.

It catalyses the reaction (6R)-10-formyltetrahydrofolate + 5-amino-1-(5-phospho-beta-D-ribosyl)imidazole-4-carboxamide = 5-formamido-1-(5-phospho-D-ribosyl)imidazole-4-carboxamide + (6S)-5,6,7,8-tetrahydrofolate. The enzyme catalyses IMP + H2O = 5-formamido-1-(5-phospho-D-ribosyl)imidazole-4-carboxamide. It participates in purine metabolism; IMP biosynthesis via de novo pathway; 5-formamido-1-(5-phospho-D-ribosyl)imidazole-4-carboxamide from 5-amino-1-(5-phospho-D-ribosyl)imidazole-4-carboxamide (10-formyl THF route): step 1/1. It functions in the pathway purine metabolism; IMP biosynthesis via de novo pathway; IMP from 5-formamido-1-(5-phospho-D-ribosyl)imidazole-4-carboxamide: step 1/1. This Lactococcus lactis subsp. lactis (strain IL1403) (Streptococcus lactis) protein is Bifunctional purine biosynthesis protein PurH.